A 248-amino-acid polypeptide reads, in one-letter code: Octanoyltransferase (248 aa).

In terms of domain architecture, BPL/LPL catalytic spans 53 to 238; the sequence is ADTGDEIWVV…NLDGASAAAD (186 aa). Residues 93-100, 165-167, and 178-180 contribute to the substrate site; these read RGGQITYH, ALG, and GLS. C196 acts as the Acyl-thioester intermediate in catalysis.

This sequence belongs to the LipB family.

The protein resides in the cytoplasm. It carries out the reaction octanoyl-[ACP] + L-lysyl-[protein] = N(6)-octanoyl-L-lysyl-[protein] + holo-[ACP] + H(+). The protein operates within protein modification; protein lipoylation via endogenous pathway; protein N(6)-(lipoyl)lysine from octanoyl-[acyl-carrier-protein]: step 1/2. Functionally, catalyzes the transfer of endogenously produced octanoic acid from octanoyl-acyl-carrier-protein onto the lipoyl domains of lipoate-dependent enzymes. Lipoyl-ACP can also act as a substrate although octanoyl-ACP is likely to be the physiological substrate. In Burkholderia orbicola (strain MC0-3), this protein is Octanoyltransferase.